The following is a 60-amino-acid chain: Large ribosomal subunit protein uL30 (60 aa).

The protein belongs to the universal ribosomal protein uL30 family. As to quaternary structure, part of the 50S ribosomal subunit.

In Dehalococcoides mccartyi (strain ATCC BAA-2266 / KCTC 15142 / 195) (Dehalococcoides ethenogenes (strain 195)), this protein is Large ribosomal subunit protein uL30.